The sequence spans 4388 residues: Intermembrane lipid transfer protein VPS13D (4388 aa).

The Chorein N-terminal domain occupies 2–115 (LEGLVAWVLN…ERERKKALLQ (114 aa)). Ser663 is subject to Phosphoserine. Residues 745 to 796 (QDNSRRKSRDGSASEETQFSDDEYKTPLATPPNTPPPESSSSNGEKTPPFSG) are disordered. The span at 747-756 (NSRRKSRDGS) shows a compositional bias: basic and acidic residues. Over residues 773 to 782 (ATPPNTPPPE) the composition is skewed to pro residues. Residues Ser1034, Ser1038, Ser1042, Ser1138, and Ser1341 each carry the phosphoserine modification. Residues 1563–1582 (ASATSSPCPDSPLPPLSTCG) are disordered. Phosphoserine is present on residues Ser1598, Ser1603, and Ser1699. Disordered regions lie at residues 1741-1771 (RPTSASRKKQKEVQDKDYPLTPPPSPTVDEP), 2070-2108 (QDKESVPSASPTGIPKHSLRKTTSTEEPRGTHSQGQFTM), and 2122-2145 (FVPSTSTKQQGPQPTLSVGQESSS). Position 1761 is a phosphothreonine (Thr1761). Position 1765 is a phosphoserine (Ser1765). The segment covering 2123–2144 (VPSTSTKQQGPQPTLSVGQESS) has biased composition (polar residues). Ser2435, Ser2671, Ser2861, Ser2864, and Ser2983 each carry phosphoserine. A UBA domain is found at 2633–2676 (TLDPVLELQLARLQELGFSMDDCRKALLACQGQLKKAASWLFKN). Positions 3276–3558 (LKIFISAPYW…LDYAWDEPTL (283 aa)) constitute an SHR-BD domain. Lys3524 is modified (N6-acetyllysine).

This sequence belongs to the VPS13 family. Widely expressed.

In terms of biological role, mediates the transfer of lipids between membranes at organelle contact sites. Functions in promoting mitochondrial clearance by mitochondrial autophagy (mitophagy), also possibly by positively regulating mitochondrial fission. Mitophagy plays an important role in regulating cell health and mitochondrial size and homeostasis. In Homo sapiens (Human), this protein is Intermembrane lipid transfer protein VPS13D.